Here is a 753-residue protein sequence, read N- to C-terminus: Neuroendocrine convertase 1 (753 aa).

The N-terminal stretch at 1–27 is a signal peptide; sequence MEQRGWTLQCTAFAFFCVWCALSSVKA. A propeptide spanning residues 28 to 110 is cleaved from the precursor; the sequence is KRQFVNEWAA…QQYEKERSKR (83 aa). Residues 129–450 form the Peptidase S8 domain; it reads QWYLQDTRMT…FGLLNAKALV (322 aa). Catalysis depends on charge relay system residues Asp-167 and His-208. Intrachain disulfides connect Cys-225/Cys-374 and Cys-317/Cys-347. The Charge relay system role is filled by Ser-382. A glycan (N-linked (GlcNAc...) asparagine) is linked at Asn-401. The P/Homo B domain maps to 460–597; sequence NVPEKKECVV…KLILHGTSSQ (138 aa). A disulfide bond links Cys-467 and Cys-494. The segment covering 633–651 has biased composition (polar residues); sequence QKSLNGNLLVPKNSSSSNV. Residues 633 to 663 form a disordered region; that stretch reads QKSLNGNLLVPKNSSSSNVEGRRDEQVQGTP. Residue Asn-645 is glycosylated (N-linked (GlcNAc...) asparagine).

This sequence belongs to the peptidase S8 family. Furin subfamily. Ca(2+) serves as cofactor.

Its subcellular location is the cytoplasmic vesicle. The protein resides in the secretory vesicle. The enzyme catalyses Release of protein hormones, neuropeptides and renin from their precursors, generally by hydrolysis of -Lys-Arg-|- bonds.. Involved in the processing of hormone and other protein precursors at sites comprised of pairs of basic amino acid residues. Substrates include POMC, renin, enkephalin, dynorphin, somatostatin, insulin and AGRP. The polypeptide is Neuroendocrine convertase 1 (Pcsk1) (Mus cookii (Cook's mouse)).